A 115-amino-acid chain; its full sequence is NADH-ubiquinone oxidoreductase chain 3 (115 aa).

Helical transmembrane passes span leucine 3–tryptophan 23, phenylalanine 55–leucine 75, and leucine 84–tyrosine 104.

This sequence belongs to the complex I subunit 3 family. Core subunit of respiratory chain NADH dehydrogenase (Complex I) which is composed of 45 different subunits. Interacts with TMEM186. Interacts with TMEM242.

The protein resides in the mitochondrion inner membrane. The catalysed reaction is a ubiquinone + NADH + 5 H(+)(in) = a ubiquinol + NAD(+) + 4 H(+)(out). Core subunit of the mitochondrial membrane respiratory chain NADH dehydrogenase (Complex I) which catalyzes electron transfer from NADH through the respiratory chain, using ubiquinone as an electron acceptor. Essential for the catalytic activity of complex I. This Bos indicus (Zebu) protein is NADH-ubiquinone oxidoreductase chain 3.